Here is a 519-residue protein sequence, read N- to C-terminus: Pleckstrin homology domain-containing family A member 8 (519 aa).

The region spanning 1-93 (MEGVLYKWTN…WLVALGSAKA (93 aa)) is the PH domain. Thr139 is subject to Phosphothreonine. Phosphoserine is present on Ser145. Position 153 is a phosphothreonine (Thr153). Residues 310–519 (TFFSTMNTSF…VHGLESDEVV (210 aa)) are glycolipid transfer protein homology domain.

As to quaternary structure, homodimer. Interacts with ARF1; the interaction together with phosphatidylinositol 4-phosphate binding is required for FAPP2 GlcCer transfer ability. Expressed in kidney cell lines.

It localises to the golgi apparatus. The protein localises to the trans-Golgi network membrane. The protein resides in the membrane. Cargo transport protein that is required for apical transport from the Golgi complex. Transports AQP2 from the trans-Golgi network (TGN) to sites of AQP2 phosphorylation. Mediates the non-vesicular transport of glucosylceramide (GlcCer) from the trans-Golgi network (TGN) to the plasma membrane and plays a pivotal role in the synthesis of complex glycosphingolipids. Binding of both phosphatidylinositol 4-phosphate (PIP) and ARF1 are essential for the GlcCer transfer ability. Also required for primary cilium formation, possibly by being involved in the transport of raft lipids to the apical membrane, and for membrane tubulation. The sequence is that of Pleckstrin homology domain-containing family A member 8 (PLEKHA8) from Homo sapiens (Human).